A 1363-amino-acid polypeptide reads, in one-letter code: Tonsoku-like protein (1363 aa).

TPR repeat units lie at residues 27–60 (AAYC…LESV), 67–100 (AVAH…AGSL), 107–147 (QRAW…VDEK), 162–195 (TRLY…AEQN), 202–235 (FRAR…ARAM), 242–275 (SECC…GSQK), 311–344 (MAIC…AELL), and 352–385 (AVIH…RKGN). A disordered region spans residues 460–511 (SMAKDTEEEEEEEEEEEEEASEAPETSELELSESEDDADGLSQQLEEDEELQ). Over residues 465-510 (TEEEEEEEEEEEEEASEAPETSELELSESEDDADGLSQQLEEDEEL) the composition is skewed to acidic residues. ANK repeat units lie at residues 528 to 557 (MGET…PLNP), 561 to 590 (CGWT…AVDD), and 597 to 626 (DGIT…SVTL). The tract at residues 662 to 786 (ERLQMASSGQ…KSRETATSSA (125 aa)) is disordered. Residues 666-684 (MASSGQASRSSPALQTIPS) show a composition bias toward polar residues. Pro residues predominate over residues 692–713 (TSPPSSPCPEPSSYTPRPPEAS). Residues 771–780 (KIPDPPKSRE) show a composition bias toward basic and acidic residues. Residue R796 is modified to Omega-N-methylarginine. 2 disordered regions span residues 841–866 (PLTR…RTRV) and 883–909 (AGDG…KENY). Polar residues predominate over residues 842–853 (LTRSGRPSTSVS). LRR repeat units lie at residues 1060-1081 (ALRE…ELLA), 1088-1108 (NLVL…RQLV), 1119-1140 (NLEE…ALAS), 1147-1168 (MLST…SHQA), 1179-1199 (HLKT…ARVL), 1206-1214 (TLKRLDLSS), 1238-1261 (ALAH…SRCL), 1266-1287 (SLTS…EELL), 1296-1317 (GLSF…DLWD), and 1322-1343 (QLQE…SVCQ).

It belongs to the Tonsoku family. Component of the MMS22L-TONSL complex, a complex at least composed of MMS22L and TONSL/NFKBIL2. Interacts with the MCM complex, the FACT complex and the RPA complex. Interacts with MCM5; the interaction is direct. Binds histones, with a strong preference for histone H3.1 (histones H3.1 and H3-4/H3.1t). Interacts (via ANK repeats) with histone H4; specifically binds histone H4 lacking methylation at 'Lys-20' (H4K20me0). May interact with DNAJC9; the interaction seems to be histone-dependent.

Its subcellular location is the nucleus. The protein resides in the chromosome. It localises to the cytoplasm. Functionally, component of the MMS22L-TONSL complex, a complex that promotes homologous recombination-mediated repair of double-strand breaks (DSBs) at stalled or collapsed replication forks. The MMS22L-TONSL complex is required to maintain genome integrity during DNA replication. It mediates the assembly of RAD51 filaments on single-stranded DNA (ssDNA): the MMS22L-TONSL complex is recruited to DSBs following histone replacement by histone chaperones and eviction of the replication protein A complex (RPA/RP-A) from DSBs. Following recruitment to DSBs, the TONSL-MMS22L complex promotes recruitment of RAD51 filaments and subsequent homologous recombination. Within the complex, TONSL acts as a histone reader, which recognizes and binds newly synthesized histones following their replacement by histone chaperones. Specifically binds histone H4 lacking methylation at 'Lys-20' (H4K20me0) and histone H3.1. This chain is Tonsoku-like protein, found in Mus musculus (Mouse).